Here is a 430-residue protein sequence, read N- to C-terminus: Adenylosuccinate synthetase (430 aa).

GTP-binding positions include G12–K18 and G40–T42. The Proton acceptor role is filled by D13. Mg(2+) contacts are provided by D13 and G40. IMP-binding positions include D13 to K16, N38 to H41, T128, R142, Q223, T238, and R302. H41 functions as the Proton donor in the catalytic mechanism. T298–R304 is a substrate binding site. GTP contacts are provided by residues R304, C330–D332, and S412–G414.

It belongs to the adenylosuccinate synthetase family. Homodimer. It depends on Mg(2+) as a cofactor.

The protein localises to the cytoplasm. The enzyme catalyses IMP + L-aspartate + GTP = N(6)-(1,2-dicarboxyethyl)-AMP + GDP + phosphate + 2 H(+). The protein operates within purine metabolism; AMP biosynthesis via de novo pathway; AMP from IMP: step 1/2. In terms of biological role, plays an important role in the de novo pathway of purine nucleotide biosynthesis. Catalyzes the first committed step in the biosynthesis of AMP from IMP. This Streptococcus thermophilus (strain CNRZ 1066) protein is Adenylosuccinate synthetase.